We begin with the raw amino-acid sequence, 187 residues long: Ribosome-recycling factor (187 aa).

The protein belongs to the RRF family.

The protein localises to the cytoplasm. Functionally, responsible for the release of ribosomes from messenger RNA at the termination of protein biosynthesis. May increase the efficiency of translation by recycling ribosomes from one round of translation to another. The chain is Ribosome-recycling factor from Flavobacterium johnsoniae (strain ATCC 17061 / DSM 2064 / JCM 8514 / BCRC 14874 / CCUG 350202 / NBRC 14942 / NCIMB 11054 / UW101) (Cytophaga johnsonae).